The following is a 475-amino-acid chain: Aspartyl/glutamyl-tRNA(Asn/Gln) amidotransferase subunit B (475 aa).

This sequence belongs to the GatB/GatE family. GatB subfamily. In terms of assembly, heterotrimer of A, B and C subunits.

The catalysed reaction is L-glutamyl-tRNA(Gln) + L-glutamine + ATP + H2O = L-glutaminyl-tRNA(Gln) + L-glutamate + ADP + phosphate + H(+). The enzyme catalyses L-aspartyl-tRNA(Asn) + L-glutamine + ATP + H2O = L-asparaginyl-tRNA(Asn) + L-glutamate + ADP + phosphate + 2 H(+). Its function is as follows. Allows the formation of correctly charged Asn-tRNA(Asn) or Gln-tRNA(Gln) through the transamidation of misacylated Asp-tRNA(Asn) or Glu-tRNA(Gln) in organisms which lack either or both of asparaginyl-tRNA or glutaminyl-tRNA synthetases. The reaction takes place in the presence of glutamine and ATP through an activated phospho-Asp-tRNA(Asn) or phospho-Glu-tRNA(Gln). The protein is Aspartyl/glutamyl-tRNA(Asn/Gln) amidotransferase subunit B of Thermodesulfovibrio yellowstonii (strain ATCC 51303 / DSM 11347 / YP87).